We begin with the raw amino-acid sequence, 403 residues long: S-arrestin (403 aa).

Position 231 is a phosphothreonine (threonine 231). The disordered stretch occupies residues 381–403; the sequence is RQNLKDTGENTEGKKDEDAGQDE.

It belongs to the arrestin family. As to quaternary structure, monomer. Homodimer. Homotetramer. Interacts with RHO (via the phosphorylated C-terminus). In terms of tissue distribution, retina and pineal gland.

It is found in the cell projection. The protein resides in the cilium. Its subcellular location is the photoreceptor outer segment. It localises to the membrane. Binds to photoactivated, phosphorylated RHO and terminates RHO signaling via G-proteins by competing with G-proteins for the same binding site on RHO. May play a role in preventing light-dependent degeneration of retinal photoreceptor cells. The sequence is that of S-arrestin (Sag) from Rattus norvegicus (Rat).